A 229-amino-acid polypeptide reads, in one-letter code: Secreted RxLR effector protein PITG_22926 (229 aa).

An N-terminal signal peptide occupies residues 1 to 23 (MRCNHTLCVVAITFLVSWSQTLS). A RxLR-dEER motif is present at residues 34–45 (PLVRSVSATEER).

Belongs to the RxLR effector family.

The protein localises to the secreted. The protein resides in the host nucleus. Its function is as follows. Secreted effector that acts as a RNA silencing suppressor, probably by inhibiting the biogenesis of small RNAs in the host plant, to manipulate host immune responses and promote Phytophthora infection. The protein is Secreted RxLR effector protein PITG_22926 of Phytophthora infestans (strain T30-4) (Potato late blight agent).